Consider the following 450-residue polypeptide: Cysteine protease ATG4C (450 aa).

Residue Cys-112 is the Nucleophile of the active site. Active-site residues include Asp-336 and His-338.

The protein belongs to the peptidase C54 family.

It is found in the cytoplasm. It carries out the reaction [protein]-C-terminal L-amino acid-glycyl-phosphatidylethanolamide + H2O = [protein]-C-terminal L-amino acid-glycine + a 1,2-diacyl-sn-glycero-3-phosphoethanolamine. In terms of biological role, cysteine protease that plays a key role in autophagy by mediating both proteolytic activation and delipidation of ATG8 family proteins. The protease activity is required for proteolytic activation of ATG8 family proteins: cleaves the C-terminal amino acid of ATG8 proteins to reveal a C-terminal glycine. Exposure of the glycine at the C-terminus is essential for ATG8 proteins conjugation to phosphatidylethanolamine (PE) and insertion to membranes, which is necessary for autophagy. In addition to the protease activity, also mediates delipidation of ATG8 family proteins. Catalyzes delipidation of PE-conjugated forms of ATG8 proteins during macroautophagy. In Xenopus laevis (African clawed frog), this protein is Cysteine protease ATG4C.